The following is a 227-amino-acid chain: Protein FAM3C (227 aa).

The signal sequence occupies residues 1 to 24 (MRVAGAAKLVVAVAVFLLTFYVIS). 2 disulfide bridges follow: cysteine 58/cysteine 86 and cysteine 64/cysteine 221. One can recognise a GG-type lectin domain in the interval 67–225 (KHFAFKMASG…VEMEGCIPQK (159 aa)).

Belongs to the FAM3 family.

The protein localises to the secreted. It localises to the cytoplasmic vesicle. May be involved in retinal laminar formation. Promotes epithelial to mesenchymal transition. This chain is Protein FAM3C (FAM3C), found in Bos taurus (Bovine).